A 183-amino-acid polypeptide reads, in one-letter code: Beta-defensin 129 (183 aa).

The first 19 residues, 1–19, serve as a signal peptide directing secretion; it reads MKLLFPIFASLMLQYQVNT. 3 cysteine pairs are disulfide-bonded: C27–C53, C34–C48, and C38–C54. The disordered stretch occupies residues 141–183; that stretch reads TATSTKSNTKESRDSATASSPPAPPPPNILPTPSLELEEAEEQ. Positions 161–170 are enriched in pro residues; the sequence is PPAPPPPNIL.

This sequence belongs to the beta-defensin family.

It localises to the secreted. Functionally, has antibacterial activity. In Gorilla gorilla gorilla (Western lowland gorilla), this protein is Beta-defensin 129 (DEFB129).